Reading from the N-terminus, the 445-residue chain is MSKKYFGTDGIRGRVGEYPITPDFMLKLGWAAGKAFRRQGICRVLVGKDTRISGYMFESVLEAGLSAAGADVLLLGPMPTPAIAYLTRTFHAEAGIVISASHNPHYDNGIKFFSGQGTKLPDELELVIEELLDNPMTVVDSAQLGKVSRINDAAGRYIEFCKSSVPTGTSFAGLKMVVDCAHGATYKVAPNVFRELGAEVAVLAAQPNGLNINDRCGSTDIVALQAEVLMQRADLGVAFDGDGDRVLMVDHTGAVVDGDELLFLIARDMHEHGKLQGGVVGTLMSNLGLELALQDMGIPFVRAKVGDRYVMAELLARNWQLGGEGSGHIVCCHHSTTGDGIIAALQVLRALKHRGQRLAEARQGMRKFPQVLVNVRYAGDKDPVGHPVVQEACERVTEQMAGRGRVLLRKSGTEPLVRVMVEGDDESQVRLHADNLAKIVSDVCA.

Catalysis depends on S101, which acts as the Phosphoserine intermediate. S101, D240, D242, and D244 together coordinate Mg(2+). Position 101 is a phosphoserine (S101).

Belongs to the phosphohexose mutase family. It depends on Mg(2+) as a cofactor. Post-translationally, activated by phosphorylation.

It catalyses the reaction alpha-D-glucosamine 1-phosphate = D-glucosamine 6-phosphate. Catalyzes the conversion of glucosamine-6-phosphate to glucosamine-1-phosphate. This Azotobacter vinelandii (strain DJ / ATCC BAA-1303) protein is Phosphoglucosamine mutase.